The sequence spans 66 residues: MDWLAKYWWILVLVFLVGVLLNVIKDLKRIDHKKFLANKPELPPHRDFNDKWDDEDDWPKKDQSKK.

A helical transmembrane segment spans residues 4–24; the sequence is LAKYWWILVLVFLVGVLLNVI. A disordered region spans residues 39 to 66; that stretch reads KPELPPHRDFNDKWDDEDDWPKKDQSKK. A compositionally biased stretch (basic and acidic residues) spans 42 to 51; that stretch reads LPPHRDFNDK.

This sequence belongs to the UPF0370 family.

It localises to the cell membrane. In Salmonella arizonae (strain ATCC BAA-731 / CDC346-86 / RSK2980), this protein is UPF0370 protein YpfN.